The sequence spans 2890 residues: Bifunctional DNA-directed RNA polymerase subunit beta-beta' (2890 aa).

The DNA-directed RNA polymerase subunit beta stretch occupies residues 1 to 1377 (MSKKIPLKNR…DINIFGDDVD (1377 aa)). The segment at 1384 to 2890 (PIMIKEDDRP…LRALEDNSKF (1507 aa)) is DNA-directed RNA polymerase subunit beta'. Zn(2+)-binding residues include cysteine 1449, cysteine 1451, cysteine 1465, and cysteine 1468. Mg(2+)-binding residues include aspartate 1849, aspartate 1851, and aspartate 1853. Residues cysteine 2179, cysteine 2253, cysteine 2260, and cysteine 2263 each coordinate Zn(2+).

It in the N-terminal section; belongs to the RNA polymerase beta chain family. In the C-terminal section; belongs to the RNA polymerase beta' chain family. The RNAP catalytic core consists of 2 alpha, 1 beta/beta' and 1 omega subunit. When a sigma factor is associated with the core the holoenzyme is formed, which can initiate transcription. Mg(2+) is required as a cofactor. Zn(2+) serves as cofactor.

The enzyme catalyses RNA(n) + a ribonucleoside 5'-triphosphate = RNA(n+1) + diphosphate. In terms of biological role, DNA-dependent RNA polymerase catalyzes the transcription of DNA into RNA using the four ribonucleoside triphosphates as substrates. This Helicobacter pylori (strain J99 / ATCC 700824) (Campylobacter pylori J99) protein is Bifunctional DNA-directed RNA polymerase subunit beta-beta' (rpoBC).